A 469-amino-acid polypeptide reads, in one-letter code: Probable cobyric acid synthase (469 aa).

Positions 241–427 (SGSIGIVRYP…VHGILENNEF (187 aa)) constitute a GATase cobBQ-type domain. Cys319 acts as the Nucleophile in catalysis. His419 is an active-site residue.

This sequence belongs to the CobB/CobQ family. CobQ subfamily.

Its pathway is cofactor biosynthesis; adenosylcobalamin biosynthesis. In terms of biological role, catalyzes amidations at positions B, D, E, and G on adenosylcobyrinic A,C-diamide. NH(2) groups are provided by glutamine, and one molecule of ATP is hydrogenolyzed for each amidation. This is Probable cobyric acid synthase from Picrophilus torridus (strain ATCC 700027 / DSM 9790 / JCM 10055 / NBRC 100828 / KAW 2/3).